A 255-amino-acid chain; its full sequence is 5-oxoprolinase subunit A (255 aa).

Belongs to the LamB/PxpA family. As to quaternary structure, forms a complex composed of PxpA, PxpB and PxpC.

It catalyses the reaction 5-oxo-L-proline + ATP + 2 H2O = L-glutamate + ADP + phosphate + H(+). Functionally, catalyzes the cleavage of 5-oxoproline to form L-glutamate coupled to the hydrolysis of ATP to ADP and inorganic phosphate. This Thermococcus onnurineus (strain NA1) protein is 5-oxoprolinase subunit A.